An 856-amino-acid polypeptide reads, in one-letter code: Leucine--tRNA ligase (856 aa).

Residues 53 to 63 carry the 'HIGH' region motif; sequence PYPSGNLHMGH. A 'KMSKS' region motif is present at residues 622–626; the sequence is KMSKS. Position 625 (K625) interacts with ATP.

Belongs to the class-I aminoacyl-tRNA synthetase family.

It is found in the cytoplasm. The enzyme catalyses tRNA(Leu) + L-leucine + ATP = L-leucyl-tRNA(Leu) + AMP + diphosphate. The polypeptide is Leucine--tRNA ligase (Prochlorococcus marinus (strain MIT 9301)).